We begin with the raw amino-acid sequence, 344 residues long: Rho guanine nucleotide exchange factor 39 (344 aa).

One can recognise a DH domain in the interval 22 to 197; that stretch reads KRVCTARELL…SETAQKVHAI (176 aa). The region spanning 227-331 is the PH domain; it reads WFLRQGWLLV…WHHSLTLAIR (105 aa).

Its subcellular location is the cell membrane. In terms of biological role, promotes cell proliferation. This chain is Rho guanine nucleotide exchange factor 39 (Arhgef39), found in Mus musculus (Mouse).